The following is a 353-amino-acid chain: MSEQKVVICKDLKSELQDFLSSLKYDKLFILMDTNTKEKCFPLVEDIPAFQKAPILVMEAGDMNKGFVSLAQIWTALSNEGASRNSLLVNLGGGMITDMGGFAGATFKRGIRTINIPTTLMASVDAAVGGKTGINFNGLKNEVGSFYPPLCVFIDCDFLRTLDRDNILSGYAEMIKHGLISSMENYASVMLFDIDTMNYSYLNSLVGQSVAVKERIVEEDPKEQGIRKALNFGHTIGHAFESLSFLKMRPILHGHAVAAGIVSELYLSHKLCGFPMEKLSQVVYYIKEYYPALFFDCTDYDTLYELMTHDKKNEGGIINFTLLKNVGDVRINQSVTKEKILESLDFYRESFGI.

NAD(+)-binding positions include Ala60 to Lys65, Gly94 to Asp98, Thr118 to Thr119, Lys131, and Lys140. Residues Glu173, His234, and His253 each coordinate Zn(2+).

The protein belongs to the sugar phosphate cyclases superfamily. Dehydroquinate synthase family. NAD(+) is required as a cofactor. It depends on Co(2+) as a cofactor. Zn(2+) serves as cofactor.

It is found in the cytoplasm. It carries out the reaction 7-phospho-2-dehydro-3-deoxy-D-arabino-heptonate = 3-dehydroquinate + phosphate. It participates in metabolic intermediate biosynthesis; chorismate biosynthesis; chorismate from D-erythrose 4-phosphate and phosphoenolpyruvate: step 2/7. In terms of biological role, catalyzes the conversion of 3-deoxy-D-arabino-heptulosonate 7-phosphate (DAHP) to dehydroquinate (DHQ). The sequence is that of 3-dehydroquinate synthase from Parabacteroides distasonis (strain ATCC 8503 / DSM 20701 / CIP 104284 / JCM 5825 / NCTC 11152).